The sequence spans 190 residues: Scytalone dehydratase-like protein Arp1 (190 aa).

Residue Y67 coordinates substrate. Active-site residues include H102 and H127. Substrate is bound at residue N148.

Belongs to the scytalone dehydratase family. In terms of assembly, homotrimer. Each subunit contains an active site, located in the central part of the hydrophobic core of the monomer, which functions independently.

Its function is as follows. Scytalone dehydratase-like protein; part of the Pks2 gene cluster that mediates the formation of infectious structures (appressoria), enabling these fungi to kill insects faster. The product of the Pks2 gene cluster is different from the one of Pks1 and has still not been identified. The protein is Scytalone dehydratase-like protein Arp1 of Metarhizium anisopliae (strain ARSEF 549).